The following is a 563-amino-acid chain: Arginine--tRNA ligase (563 aa).

Residues 120 to 130 (PNIAKPFHIGH) carry the 'HIGH' region motif.

It belongs to the class-I aminoacyl-tRNA synthetase family. Monomer.

The protein localises to the cytoplasm. It catalyses the reaction tRNA(Arg) + L-arginine + ATP = L-arginyl-tRNA(Arg) + AMP + diphosphate. The sequence is that of Arginine--tRNA ligase from Clostridium botulinum (strain ATCC 19397 / Type A).